Consider the following 364-residue polypeptide: MAQQTPLYEQHTLCGARMVDFHGWMMPLHYGSQLDEHHAVRTDAGMFDVSHMTIVDLHGSRTREFLRYLLANDVAKLTKTGKALYSGMLNASGGVIDDLIVYYFTEDFFRLVVNSATREKDLSWITQHAEPYAIDITVRDDLSLIAVQGPNAQEKAATLFTDEQRHAVEGMKPFFGVQAGDLFIATTGYTGEAGYEIAMPNEKAADFWRALVEAGVKPCGLGARDTLRLEAGMNLYGQEMDEGISPLAANMGWTIAWEPADRDFIGREALEMQREKGHEQLVGLVMTEKGVLRNELPVRFTDAQGNQQEGIITSGTFSPTLGYSIALARVPAGIGETAIVQIRNREMPVKVTKPVFVRNGKAVA.

This sequence belongs to the GcvT family. In terms of assembly, the glycine cleavage system is composed of four proteins: P, T, L and H.

The catalysed reaction is N(6)-[(R)-S(8)-aminomethyldihydrolipoyl]-L-lysyl-[protein] + (6S)-5,6,7,8-tetrahydrofolate = N(6)-[(R)-dihydrolipoyl]-L-lysyl-[protein] + (6R)-5,10-methylene-5,6,7,8-tetrahydrofolate + NH4(+). In terms of biological role, the glycine cleavage system catalyzes the degradation of glycine. The polypeptide is Aminomethyltransferase (Salmonella paratyphi C (strain RKS4594)).